We begin with the raw amino-acid sequence, 1357 residues long: DNA-directed RNA polymerase subunit beta (1357 aa).

It belongs to the RNA polymerase beta chain family. The RNAP catalytic core consists of 2 alpha, 1 beta, 1 beta' and 1 omega subunit. When a sigma factor is associated with the core the holoenzyme is formed, which can initiate transcription.

The enzyme catalyses RNA(n) + a ribonucleoside 5'-triphosphate = RNA(n+1) + diphosphate. Functionally, DNA-dependent RNA polymerase catalyzes the transcription of DNA into RNA using the four ribonucleoside triphosphates as substrates. The polypeptide is DNA-directed RNA polymerase subunit beta (Nitrosomonas europaea (strain ATCC 19718 / CIP 103999 / KCTC 2705 / NBRC 14298)).